The primary structure comprises 99 residues: C-C motif chemokine 17 (99 aa).

An N-terminal signal peptide occupies residues Met-1–Ala-23. 2 disulfide bridges follow: Cys-33–Cys-57 and Cys-34–Cys-73.

Belongs to the intercrine beta (chemokine CC) family. Expressed in thymus and also in spleen, lung, lymph node, kidney, small intestine, colon and skin.

It is found in the secreted. In terms of biological role, chemokine, which displays chemotactic activity for T lymphocytes, preferentially Th2 cells, but not monocytes or granulocytes. Therefore plays an important role in a wide range of inflammatory and immunological processes. Acts by binding to CCR4 at T-cell surface. Mediates GM-CSF/CSF2-driven pain and inflammation. In the brain, required to maintain the typical, highly branched morphology of hippocampal microglia under homeostatic conditions. May be important for the appropriate adaptation of microglial morphology and synaptic plasticity to acute lipopolysaccharide (LPS)-induced neuroinflammation. Plays a role in wound healing, mainly by inducing fibroblast migration into the wound. This Felis catus (Cat) protein is C-C motif chemokine 17 (CCL17).